We begin with the raw amino-acid sequence, 167 residues long: Ribosome rescue factor SmrB (167 aa).

Positions 91-166 (LDLHGLTREQ…GEAAILILVD (76 aa)) constitute a Smr domain.

Belongs to the SmrB family. As to quaternary structure, associates with collided ribosomes, but not with correctly translating polysomes.

Acts as a ribosome collision sensor. Detects stalled/collided disomes (pairs of ribosomes where the leading ribosome is stalled and a second ribosome has collided with it) and endonucleolytically cleaves mRNA at the 5' boundary of the stalled ribosome. Stalled/collided disomes form a new interface (primarily via the 30S subunits) that binds SmrB. Cleaved mRNA becomes available for tmRNA ligation, leading to ribosomal subunit dissociation and rescue of stalled ribosomes. The polypeptide is Ribosome rescue factor SmrB (Haemophilus influenzae (strain ATCC 51907 / DSM 11121 / KW20 / Rd)).